The primary structure comprises 180 residues: NADH-quinone oxidoreductase subunit I (180 aa).

4Fe-4S ferredoxin-type domains follow at residues Leu-50–Thr-80 and Glu-90–Asp-119. Cys-60, Cys-63, Cys-66, Cys-70, Cys-99, Cys-102, Cys-105, and Cys-109 together coordinate [4Fe-4S] cluster.

This sequence belongs to the complex I 23 kDa subunit family. In terms of assembly, NDH-1 is composed of 13 different subunits. Subunits NuoA, H, J, K, L, M, N constitute the membrane sector of the complex. It depends on [4Fe-4S] cluster as a cofactor.

It localises to the cell inner membrane. It carries out the reaction a quinone + NADH + 5 H(+)(in) = a quinol + NAD(+) + 4 H(+)(out). NDH-1 shuttles electrons from NADH, via FMN and iron-sulfur (Fe-S) centers, to quinones in the respiratory chain. The immediate electron acceptor for the enzyme in this species is believed to be ubiquinone. Couples the redox reaction to proton translocation (for every two electrons transferred, four hydrogen ions are translocated across the cytoplasmic membrane), and thus conserves the redox energy in a proton gradient. This chain is NADH-quinone oxidoreductase subunit I, found in Shigella dysenteriae serotype 1 (strain Sd197).